The primary structure comprises 483 residues: Membrane-bound lytic murein transglycosylase F (483 aa).

Positions 1 to 18 are cleaved as a signal peptide; it reads MKGLIARFIAGFALLLWA. Residues 19 to 267 form a non-LT domain region; that stretch reads WDMVFPWQQL…RIEEKYFNHL (249 aa). The interval 269–483 is LT domain; sequence HFDYVDIQSY…SKESDSTLKE (215 aa). Glu-312 is an active-site residue. Residues 458–483 are disordered; it reads QQIQNNEEQPSVPQEISKESDSTLKE. Basic and acidic residues predominate over residues 473-483; the sequence is ISKESDSTLKE.

This sequence in the N-terminal section; belongs to the bacterial solute-binding protein 3 family. In the C-terminal section; belongs to the transglycosylase Slt family.

The protein localises to the cell outer membrane. It carries out the reaction Exolytic cleavage of the (1-&gt;4)-beta-glycosidic linkage between N-acetylmuramic acid (MurNAc) and N-acetylglucosamine (GlcNAc) residues in peptidoglycan, from either the reducing or the non-reducing ends of the peptidoglycan chains, with concomitant formation of a 1,6-anhydrobond in the MurNAc residue.. Its function is as follows. Murein-degrading enzyme that degrades murein glycan strands and insoluble, high-molecular weight murein sacculi, with the concomitant formation of a 1,6-anhydromuramoyl product. Lytic transglycosylases (LTs) play an integral role in the metabolism of the peptidoglycan (PG) sacculus. Their lytic action creates space within the PG sacculus to allow for its expansion as well as for the insertion of various structures such as secretion systems and flagella. The sequence is that of Membrane-bound lytic murein transglycosylase F from Actinobacillus pleuropneumoniae serotype 5b (strain L20).